We begin with the raw amino-acid sequence, 710 residues long: Ephexin-1 (710 aa).

Composition is skewed to basic and acidic residues over residues 1 to 11 (METRESEDLEK) and 26 to 41 (EPAK…KEET). A disordered region spans residues 1–143 (METRESEDLE…PGNGATPEEW (143 aa)). The interval 1–273 (METRESEDLE…LEILQPEEIK (273 aa)) is regulatory region; modulates activity toward RHOA, RAC1 and CDC42. 2 stretches are compositionally biased toward polar residues: residues 89-102 (ADSQ…NEPL) and 127-136 (MSESSSTPGN). Tyrosine 179 bears the Phosphotyrosine mark. Residues 194–236 (RRQQDAEIEDNTNGSPASEDTPEEEEEEEEEEEPASPPERKTL) form a disordered region. Over residues 213-227 (DTPEEEEEEEEEEEP) the composition is skewed to acidic residues. Residues 273 to 457 (KLQEAMFELV…EMVVKACNEG (185 aa)) enclose the DH domain. The 113-residue stretch at 489–601 (WLLKQGELQQ…WMTSLAPNRR (113 aa)) folds into the PH domain. Residues 612–673 (LDCPQVQCVH…PSSMTEEILN (62 aa)) enclose the SH3 domain. A compositionally biased stretch (basic and acidic residues) spans 687–699 (VHKMDDPQRSQNK). The interval 687 to 710 (VHKMDDPQRSQNKDRRKLGSRNRQ) is disordered. Over residues 700–710 (DRRKLGSRNRQ) the composition is skewed to basic residues.

As to quaternary structure, interacts with CDK5R1 and EPHA4; activated by EPHA4 through the CDK5 kinase. In terms of processing, src-dependent phosphorylation at Tyr-179 upon EPHA4 activation increases the guanine exchange factor activity toward RHOA. Phosphorylation by CDK5 upon EPHA4 activation by EFNA1 may regulate dendritic spine morphogenesis. In terms of tissue distribution, highly expressed in brain specifically in caudate nucleus and to a lower extent in amygdala and hippocampus. Also detected in lung.

It is found in the cytoplasm. The protein resides in the membrane. It localises to the cell projection. Its subcellular location is the growth cone. Functionally, acts as a guanine nucleotide exchange factor (GEF) which differentially activates the GTPases RHOA, RAC1 and CDC42. Plays a role in axon guidance regulating ephrin-induced growth cone collapse and dendritic spine morphogenesis. Upon activation by ephrin through EPHA4, the GEF activity switches toward RHOA resulting in its activation. Activated RHOA promotes cone retraction at the expense of RAC1- and CDC42-stimulated growth cone extension. The protein is Ephexin-1 (NGEF) of Homo sapiens (Human).